Reading from the N-terminus, the 760-residue chain is Complement C2 (760 aa).

The N-terminal stretch at 1–18 (MAPLLALFYLLQLGPGLA) is a signal peptide. 3 Sushi domains span residues 20–90 (LFCN…AVCK), 92–151 (VRCL…VCDN), and 154–212 (SHCP…ICRQ). 6 disulfides stabilise this stretch: Cys22/Cys62, Cys49/Cys89, Cys94/Cys136, Cys122/Cys149, Cys156/Cys197, and Cys182/Cys210. Asn27 and Asn32 each carry an N-linked (GlcNAc...) asparagine glycan. Residue Asn117 is glycosylated (N-linked (GlcNAc...) asparagine). Residues 261-459 (NLYLLLDASQ…KALQQIFEHM (199 aa)) form the VWFA domain. The MIDAS-like motif signature appears at 267–271 (DASQS). Residues Ser269 and Ser271 each coordinate Mg(2+). Asn297 and Asn340 each carry an N-linked (GlcNAc...) asparagine glycan. Residue Thr344 coordinates Mg(2+). Intrachain disulfides connect Cys470-Cys590, Cys499-Cys515, Cys593-Cys609, Cys647-Cys674, and Cys685-Cys715. Residues 471–752 (GVGNMSANAS…LQPWLRQHLD (282 aa)) enclose the Peptidase S1 domain. N-linked (GlcNAc...) asparagine glycans are attached at residues Asn474 and Asn478. Residues His514 and Asp570 each act as charge relay system in the active site. N-linked (GlcNAc...) asparagine glycosylation is present at Asn663. The Charge relay system role is filled by Ser689.

This sequence belongs to the peptidase S1 family. In terms of assembly, serine protease component of the C3 convertase, also named C4bC2b, composed of the serine protease complement C2b and complement C4b. Serine protease component of the C5 convertase, also named C4bC2bC3b, composed of the serine protease complement C2b, complement C3b, as well as complement C4b. Mg(2+) serves as cofactor. Mn(2+) is required as a cofactor. In terms of processing, cleaved and activated by different proteases depending on the complement pathway to generate complement C2a and serine protease complement C2b chains. Cleaved and activated by C1S following activation by the classical complement system. Cleaved and activated by MASP2 following activation by the lectin complement system. Cleaved and activated by GZMK following activation by the GZMK complement system.

Its subcellular location is the secreted. The protein localises to the cell surface. It catalyses the reaction Selective cleavage of Arg-|-Ser bond in complement component C3 alpha-chain to form C3a and C3b, and Arg-|-Xaa bond in complement component C5 alpha-chain to form C5a and C5b.. In terms of biological role, precursor of the catalytic component of the C3 and C5 convertase complexes, which are part of the complement pathway, a cascade of proteins that leads to phagocytosis and breakdown of pathogens and signaling that strengthens the adaptive immune system. Component C2 is part of the classical, lectin and GZMK complement systems. Functionally, catalytic component of the complement C3 and C5 convertase complexes. Following complement activation, recruited to the surface of pathogens by complement C4b opsonin to form the C3 convertase, or C3b and C4b opsonins to form the C5 convertase. As part of the C3 convertase, cleaves and activate C3 into C3a anaphylatoxin and C3b opsonin, the next components of the complement pathways. As part of the C5 convertase, cleaves and activate C5 into C5a anaphylatoxin and C5b component of the membrane attack complex. The protein is Complement C2 of Mus musculus (Mouse).